We begin with the raw amino-acid sequence, 652 residues long: Phosphatidylinositol-binding clathrin assembly protein (652 aa).

N-acetylserine is present on serine 2. The region spanning 14–145 (QHSVTGSAVS…VSYRQVAFDF (132 aa)) is the ENTH domain. Residues serine 16 and serine 20 each carry the phosphoserine modification. Residues 221–294 (KYFDMKKNQC…LEGKKIKDST (74 aa)) form an interaction with PIMREG region. Lysine 238 is covalently cross-linked (Glycyl lysine isopeptide (Lys-Gly) (interchain with G-Cter in SUMO2)). A phosphoserine mark is found at serine 303 and serine 315. The disordered stretch occupies residues 559–580 (KNDVNWSQPGEKKLTGGSNWQP).

The protein belongs to the PICALM/SNAP91 family. As to quaternary structure, binds to clathrin; involves primarily the C-terminal sequences, but the full-length protein is required for full binding capacity. Binds phosphatidylinositol 4,5- bisphosphate. Interacts with PIMREG; this interaction may change the subcellular location into the nucleus. Interacts with AP2A1 (via its alpha-appendage domain). Interacts (via N-terminus) with VAMP2; VAMP3; VAMP7 and VAMP8 (Via N-terminus). Interacts with LC3/MAP1LC3A. As to expression, expressed in all tissues examined.

It is found in the cell membrane. Its subcellular location is the membrane. It localises to the clathrin-coated pit. The protein resides in the golgi apparatus. The protein localises to the cytoplasmic vesicle. It is found in the clathrin-coated vesicle. Its subcellular location is the nucleus. Its function is as follows. Cytoplasmic adapter protein that plays a critical role in clathrin-mediated endocytosis which is important in processes such as internalization of cell receptors, synaptic transmission or removal of apoptotic cells. Recruits AP-2 and attaches clathrin triskelions to the cytoplasmic side of plasma membrane leading to clathrin-coated vesicles (CCVs) assembly. Furthermore, regulates clathrin-coated vesicle size and maturation by directly sensing and driving membrane curvature. In addition to binding to clathrin, mediates the endocytosis of small R-SNARES (Soluble NSF Attachment Protein REceptors) between plasma membranes and endosomes including VAMP2, VAMP3, VAMP4, VAMP7 or VAMP8. In turn, PICALM-dependent SNARE endocytosis is required for the formation and maturation of autophagic precursors. Modulates thereby autophagy and the turnover of autophagy substrates such as MAPT/TAU or amyloid precursor protein cleaved C-terminal fragment (APP-CTF). The polypeptide is Phosphatidylinositol-binding clathrin assembly protein (PICALM) (Homo sapiens (Human)).